Consider the following 524-residue polypeptide: Decreased expression in renal and prostate cancer protein (524 aa).

The span at 1–12 shows a compositional bias: basic and acidic residues; it reads MKEPRIFPRERP. Disordered stretches follow at residues 1–43 and 64–252; these read MKEP…TGHP and PFPR…LDAR. Low complexity predominate over residues 129–148; the sequence is LNPRTGALPGPGPLSNPRLG. Positions 163 to 181 are enriched in gly residues; that stretch reads GLLGAGPDPRGGGPMGPGS. Ser-302 carries the phosphoserine modification. Residues 312 to 323 show a composition bias toward low complexity; it reads PMGPNSGPSSRG. The segment at 312 to 332 is disordered; the sequence is PMGPNSGPSSRGIGLPGPNPS. Arg-364 carries the post-translational modification Asymmetric dimethylarginine. The residue at position 387 (Arg-387) is an Omega-N-methylarginine. Ser-423 bears the Phosphoserine mark.

The protein belongs to the DERPC family. In terms of tissue distribution, ubiquitously expressed, with abundant expression in kidney, skeletal muscle, testis, liver, ovary, and heart and moderate expression in prostate. Expression is significantly reduced in renal and prostate tumors. No differential expression in breast cancer cells, between lobular carcinoma and normal lobules.

Its subcellular location is the nucleus. Potential tumor suppressor. Inhibits prostate tumor cell growth, when overexpressed. This is Decreased expression in renal and prostate cancer protein from Homo sapiens (Human).